Reading from the N-terminus, the 448-residue chain is Tubulin alpha chain, nucleomorph (448 aa).

The GTP site is built by glutamine 11, glutamate 71, serine 140, glycine 144, threonine 145, threonine 179, asparagine 206, and asparagine 228. Glutamate 71 is a Mg(2+) binding site. The active site involves glutamate 254.

Belongs to the tubulin family. In terms of assembly, dimer of alpha and beta chains. A typical microtubule is a hollow water-filled tube with an outer diameter of 25 nm and an inner diameter of 15 nM. Alpha-beta heterodimers associate head-to-tail to form protofilaments running lengthwise along the microtubule wall with the beta-tubulin subunit facing the microtubule plus end conferring a structural polarity. Microtubules usually have 13 protofilaments but different protofilament numbers can be found in some organisms and specialized cells. It depends on Mg(2+) as a cofactor.

It carries out the reaction GTP + H2O = GDP + phosphate + H(+). Tubulin is the major constituent of microtubules, a cylinder consisting of laterally associated linear protofilaments composed of alpha- and beta-tubulin heterodimers. Microtubules grow by the addition of GTP-tubulin dimers to the microtubule end, where a stabilizing cap forms. Below the cap, tubulin dimers are in GDP-bound state, owing to GTPase activity of alpha-tubulin. This is Tubulin alpha chain, nucleomorph (tubA) from Guillardia theta (Cryptophyte).